Reading from the N-terminus, the 72-residue chain is Potassium channel toxin epsilon-KTx 1.1 (72 aa).

Residues M1–S30 form the signal peptide. Intrachain disulfides connect C34/C42, C37/C58, C41/C51, and C46/C56. The propeptide occupies G60 to Q72.

Belongs to the short scorpion toxin superfamily. Potassium channel inhibitor family. Epsilon-KTx 01 subfamily. Expressed by the venom gland.

The protein localises to the secreted. Functionally, potassium channel blocker. At 3 uM, this toxin blocks voltage-independently voltage-gated potassium channels rKv1.2/KCNA2 (25%), hKv1.3/KCNA3 (27%), rKv4.2/KCND2 (25%), Kv10.1/KCNH1/EAG1 (15%), Kv11/hERG (12%), and Shaker-IR (10%). On hKv1.3/KCNA3, the IC(50) is 17.1 +-3.3 uM. This chain is Potassium channel toxin epsilon-KTx 1.1, found in Tityus serrulatus (Brazilian scorpion).